The chain runs to 257 residues: Glutamate racemase (257 aa).

Substrate is bound by residues 12 to 13 and 44 to 45; these read DS and YG. Cysteine 75 serves as the catalytic Proton donor/acceptor. 76–77 contributes to the substrate binding site; that stretch reads NT. The active-site Proton donor/acceptor is the cysteine 185. Substrate is bound at residue 186–187; sequence TH.

The protein belongs to the aspartate/glutamate racemases family.

It carries out the reaction L-glutamate = D-glutamate. It functions in the pathway cell wall biogenesis; peptidoglycan biosynthesis. Provides the (R)-glutamate required for cell wall biosynthesis. The protein is Glutamate racemase of Clostridium botulinum (strain Kyoto / Type A2).